Here is a 101-residue protein sequence, read N- to C-terminus: Small ribosomal subunit protein uS14 (101 aa).

The tract at residues 1 to 22 (MAKVSSIKKNESRKKKSQSLHN) is disordered. Positions 11-22 (ESRKKKSQSLHN) are enriched in basic residues.

It belongs to the universal ribosomal protein uS14 family. In terms of assembly, part of the 30S ribosomal subunit. Contacts proteins S3 and S10.

In terms of biological role, binds 16S rRNA, required for the assembly of 30S particles and may also be responsible for determining the conformation of the 16S rRNA at the A site. This chain is Small ribosomal subunit protein uS14, found in Rickettsia conorii (strain ATCC VR-613 / Malish 7).